A 73-amino-acid chain; its full sequence is U-scoloptoxin(22)-Cw1a (73 aa).

A signal peptide spans Met1–Ala24.

The protein belongs to the scoloptoxin-22 family. In terms of processing, contains 1 disulfide bond. In terms of tissue distribution, expressed by the venom gland.

Its subcellular location is the secreted. In Cormocephalus westwoodi (Westwood's green centipede), this protein is U-scoloptoxin(22)-Cw1a.